The chain runs to 412 residues: NADH-quinone oxidoreductase subunit D (412 aa).

Belongs to the complex I 49 kDa subunit family. As to quaternary structure, NDH-1 is composed of at least 14 different subunits, Nqo1 to Nqo14. The complex has a L-shaped structure, with the hydrophobic arm (subunits Nqo7, Nqo8, Nqo10 to Nqo14) embedded in the inner membrane and the hydrophilic peripheral arm (subunits Nqo1 to Nqo6, Nqo9) protruding into the bacterial cytoplasm. The hydrophilic domain contains all the redox centers. NADH-quinone oxidoreductase forms a supercomplex with ubiquinol-cytochrome c reductase complex (complex III or cytochrome b-c1 complex) and cytochrome c oxidase (complex IV), which stabilizes the NADH-quinone oxidoreductase complex.

It is found in the cell inner membrane. The enzyme catalyses a quinone + NADH + 5 H(+)(in) = a quinol + NAD(+) + 4 H(+)(out). Its function is as follows. NDH-1 shuttles electrons from NADH, via FMN and iron-sulfur (Fe-S) centers, to quinones in the respiratory chain. The immediate electron acceptor for the enzyme in this species is believed to be ubiquinone. Couples the redox reaction to proton translocation (for every two electrons transferred, four hydrogen ions are translocated across the cytoplasmic membrane), and thus conserves the redox energy in a proton gradient. The sequence is that of NADH-quinone oxidoreductase subunit D (nuoD) from Paracoccus denitrificans (strain Pd 1222).